The following is a 247-amino-acid chain: RNA-free ribonuclease P (247 aa).

Belongs to the HARP family.

The catalysed reaction is Endonucleolytic cleavage of RNA, removing 5'-extranucleotides from tRNA precursor.. Functionally, RNA-free RNase P that catalyzes the removal of the 5'-leader sequence from pre-tRNA to produce the mature 5'-terminus. The chain is RNA-free ribonuclease P from Methanosarcina mazei (strain ATCC BAA-159 / DSM 3647 / Goe1 / Go1 / JCM 11833 / OCM 88) (Methanosarcina frisia).